Consider the following 341-residue polypeptide: UDP-3-O-acylglucosamine N-acyltransferase (341 aa).

Residue His242 is the Proton acceptor of the active site.

This sequence belongs to the transferase hexapeptide repeat family. LpxD subfamily. Homotrimer.

It carries out the reaction a UDP-3-O-[(3R)-3-hydroxyacyl]-alpha-D-glucosamine + a (3R)-hydroxyacyl-[ACP] = a UDP-2-N,3-O-bis[(3R)-3-hydroxyacyl]-alpha-D-glucosamine + holo-[ACP] + H(+). It participates in bacterial outer membrane biogenesis; LPS lipid A biosynthesis. Functionally, catalyzes the N-acylation of UDP-3-O-acylglucosamine using 3-hydroxyacyl-ACP as the acyl donor. Is involved in the biosynthesis of lipid A, a phosphorylated glycolipid that anchors the lipopolysaccharide to the outer membrane of the cell. The chain is UDP-3-O-acylglucosamine N-acyltransferase from Haemophilus influenzae (strain ATCC 51907 / DSM 11121 / KW20 / Rd).